A 442-amino-acid chain; its full sequence is Putative helicase 161L (442 aa).

The region spanning I88–K241 is the Helicase ATP-binding domain. C101 to T108 contacts ATP. The DEAH box signature appears at D194–H197.

Belongs to the DEAD box helicase family. DEAH subfamily.

In Invertebrate iridescent virus 6 (IIV-6), this protein is Putative helicase 161L.